The sequence spans 181 residues: Peptide deformylase 2 (181 aa).

2 residues coordinate Fe cation: Cys109 and His151. Glu152 is an active-site residue. Fe cation is bound at residue His155.

Belongs to the polypeptide deformylase family. Fe(2+) is required as a cofactor.

It catalyses the reaction N-terminal N-formyl-L-methionyl-[peptide] + H2O = N-terminal L-methionyl-[peptide] + formate. Its function is as follows. Removes the formyl group from the N-terminal Met of newly synthesized proteins. Requires at least a dipeptide for an efficient rate of reaction. N-terminal L-methionine is a prerequisite for activity but the enzyme has broad specificity at other positions. The polypeptide is Peptide deformylase 2 (Shewanella oneidensis (strain ATCC 700550 / JCM 31522 / CIP 106686 / LMG 19005 / NCIMB 14063 / MR-1)).